A 462-amino-acid polypeptide reads, in one-letter code: Cysteine desulfurase, mitochondrial (462 aa).

Residues 132 to 133 (AT), asparagine 212, glutamine 240, and 260 to 262 (SGH) each bind pyridoxal 5'-phosphate. Lysine 263 carries the post-translational modification N6-(pyridoxal phosphate)lysine. Position 300 (threonine 300) interacts with pyridoxal 5'-phosphate. The Cysteine persulfide intermediate role is filled by cysteine 386. [2Fe-2S] cluster is bound at residue cysteine 386.

It belongs to the class-V pyridoxal-phosphate-dependent aminotransferase family. NifS/IscS subfamily. As to quaternary structure, component of the mitochondrial core iron-sulfur cluster (ISC) assembly complex at least composed of the cystein desulfurase Nfs1, the scaffold protein IscU, the accessory protein bcn92/Isd11/Lyrm4, and probably fh/frataxin. Interacts with bcn92/Isd11/Lyrm4 and IscU. Pyridoxal 5'-phosphate serves as cofactor. As to expression, ubiquitous expression at high levels in any life stage.

The protein resides in the mitochondrion. It is found in the nucleus. The catalysed reaction is (sulfur carrier)-H + L-cysteine = (sulfur carrier)-SH + L-alanine. Active when in complex with bcn92/Isd11/Lyrm4. L-cysteine binding kinetics are reduced in the presence of bcn92/Isd11/Lyrm4 and IscU. Activity is regulated by other components of the mitochondrial core iron-sulfur cluster (ISC) complex; Activity is reduced in the presence of IscU but enhanced when both IscU and fh/frataxin are present. Its function is as follows. Catalyzes the removal of elemental sulfur from cysteine to produce alanine. It supplies the inorganic sulfur for iron-sulfur (Fe-S) clusters. The sequence is that of Cysteine desulfurase, mitochondrial from Drosophila melanogaster (Fruit fly).